We begin with the raw amino-acid sequence, 233 residues long: LexA repressor (233 aa).

The segment at residues 26 to 46 (FEEMKEALDLKSKSGVHRLIS) is a DNA-binding region (H-T-H motif). Residues serine 153 and lysine 191 each act as for autocatalytic cleavage activity in the active site.

This sequence belongs to the peptidase S24 family. Homodimer.

It catalyses the reaction Hydrolysis of Ala-|-Gly bond in repressor LexA.. Represses a number of genes involved in the response to DNA damage (SOS response), including recA and lexA. In the presence of single-stranded DNA, RecA interacts with LexA causing an autocatalytic cleavage which disrupts the DNA-binding part of LexA, leading to derepression of the SOS regulon and eventually DNA repair. This chain is LexA repressor, found in Erythrobacter litoralis (strain HTCC2594).